The primary structure comprises 196 residues: Small ribosomal subunit protein uS4c (196 aa).

The interval 17–36 is disordered; the sequence is ALPGLTRKTPKSGSNLKKKF. An S4 RNA-binding domain is found at 89-169; sequence MRLDNILFRL…LPKHLTIDTL (81 aa).

This sequence belongs to the universal ribosomal protein uS4 family. In terms of assembly, part of the 30S ribosomal subunit. Contacts protein S5. The interaction surface between S4 and S5 is involved in control of translational fidelity.

Its subcellular location is the plastid. The protein resides in the chloroplast. Its function is as follows. One of the primary rRNA binding proteins, it binds directly to 16S rRNA where it nucleates assembly of the body of the 30S subunit. With S5 and S12 plays an important role in translational accuracy. This is Small ribosomal subunit protein uS4c (rps4) from Festuca gigantea (Giant fescue).